A 173-amino-acid polypeptide reads, in one-letter code: Flagellar biosynthetic protein FliV (173 aa).

Belongs to the FliB family.

Its function is as follows. Required for the secretion of flagellin and expression of motility. The protein is Flagellar biosynthetic protein FliV (fliV) of Salmonella muenchen.